Reading from the N-terminus, the 457-residue chain is Exodeoxyribonuclease 7 large subunit (457 aa).

This sequence belongs to the XseA family. As to quaternary structure, heterooligomer composed of large and small subunits.

The protein resides in the cytoplasm. It catalyses the reaction Exonucleolytic cleavage in either 5'- to 3'- or 3'- to 5'-direction to yield nucleoside 5'-phosphates.. Functionally, bidirectionally degrades single-stranded DNA into large acid-insoluble oligonucleotides, which are then degraded further into small acid-soluble oligonucleotides. This Citrobacter koseri (strain ATCC BAA-895 / CDC 4225-83 / SGSC4696) protein is Exodeoxyribonuclease 7 large subunit.